Reading from the N-terminus, the 242-residue chain is Venom nerve growth factor 1 (242 aa).

Positions 1–18 (MSMLCYTLIIAFLIGIWA) are cleaved as a signal peptide. The propeptide occupies 19–125 (APKSEDNVPL…ALNRNIRSKR (107 aa)). Residues 26-69 (VPLGSPATSDLSDTSCAQTHKALKTSRNTDQRHPAPKKAEDQEL) are disordered. Positions 31 to 43 (PATSDLSDTSCAQ) are enriched in polar residues. A compositionally biased stretch (basic and acidic residues) spans 52–66 (RNTDQRHPAPKKAED). Cystine bridges form between C139–C203, C181–C231, and C191–C233. N-linked (GlcNAc...) asparagine glycosylation occurs at N147.

The protein belongs to the NGF-beta family. Homodimer; non-covalently linked. As to expression, expressed by the venom gland.

It is found in the secreted. Functionally, nerve growth factor is important for the development and maintenance of the sympathetic and sensory nervous systems. It stimulates division and differentiation of sympathetic and embryonic sensory neurons as well as basal forebrain cholinergic neurons in the brain. Its relevance in the snake venom is not clear. However, it has been shown to inhibit metalloproteinase-dependent proteolysis of platelet glycoprotein Ib alpha, suggesting a metalloproteinase inhibition to prevent metalloprotease autodigestion and/or protection against prey proteases. Binds a lipid between the two protein chains in the homodimer. The lipid-bound form promotes histamine relase from mouse mast cells, contrary to the lipid-free form. The sequence is that of Venom nerve growth factor 1 from Demansia vestigiata (Lesser black whip snake).